Consider the following 546-residue polypeptide: MAIITLPYRYLERLAGTDRQTIIDRVPMIGADIERIEDDHVDVEFFPNRPDLYSPEGVARAMRGFLGIEEGLPAYTVRPSGIAFSVDPGLADIRPFLGSAVIRNVNLDEEAIESLMALQEALHWAVGRGRGKVAIGVHDLDTVTPPFRYIASPRNRSFVPLDFEREMTMEEMLADHPKGRDYAHLVENFDTFPLIVDAENRVLSFPPIINGELTRVTAATKNILLDCTGTDRRAVMTAVNIICTALIEAGATVETVTVEGEEMPTLAPAERVVSVAECSRLLGLSLTPQEMAGLLRRMRFDAEPDGDSRVRILVPCYRSDILHDWDIFEDVAIAYGIENFDAALPATSTVAQEHPIPAVAGAVRSVMTGLGYLEAIPFTLTNERVLYANMQREPAPGTLRLLHPISEEQTVVRTDLLPLLMEMLLANKHRELPQRLFAVGDVVEDCVTYLKVAAVSIHPAADFSEAYAAADVLCRELSLSYTVVESADPAFLDGRRGDIVVDGKIVGVFGEIHPAVLGAFDLEHPVAALALDLTAVPGYPALPDTP.

A B5 domain is found at 266–342 (LAPAERVVSV…IAYGIENFDA (77 aa)). Mg(2+) is bound by residues Asp320, Asp326, Glu329, and Asp330.

This sequence belongs to the phenylalanyl-tRNA synthetase beta subunit family. Type 2 subfamily. As to quaternary structure, tetramer of two alpha and two beta subunits. It depends on Mg(2+) as a cofactor.

Its subcellular location is the cytoplasm. The enzyme catalyses tRNA(Phe) + L-phenylalanine + ATP = L-phenylalanyl-tRNA(Phe) + AMP + diphosphate + H(+). This is Phenylalanine--tRNA ligase beta subunit from Methanoculleus marisnigri (strain ATCC 35101 / DSM 1498 / JR1).